The following is a 417-amino-acid chain: Adenosylhomocysteinase (417 aa).

Residues Thr-53, Asp-125, and Glu-149 each coordinate substrate. An NAD(+)-binding site is contributed by 150–152 (TTT). 2 residues coordinate substrate: Lys-179 and Asp-183. NAD(+)-binding positions include Asn-184, 213–218 (GYGWVG), Glu-236, Asn-271, 292–294 (AGH), and Asn-339.

The protein belongs to the adenosylhomocysteinase family. NAD(+) is required as a cofactor.

The protein resides in the cytoplasm. It carries out the reaction S-adenosyl-L-homocysteine + H2O = L-homocysteine + adenosine. Its pathway is amino-acid biosynthesis; L-homocysteine biosynthesis; L-homocysteine from S-adenosyl-L-homocysteine: step 1/1. Functionally, may play a key role in the regulation of the intracellular concentration of adenosylhomocysteine. The chain is Adenosylhomocysteinase from Saccharolobus solfataricus (strain ATCC 35092 / DSM 1617 / JCM 11322 / P2) (Sulfolobus solfataricus).